A 644-amino-acid polypeptide reads, in one-letter code: Exoribonuclease 2 (644 aa).

One can recognise an RNB domain in the interval 189 to 516; that stretch reads REDLTALNFV…NHRLLKAMIT (328 aa). In terms of domain architecture, S1 motif spans 561–643; the sequence is DTRFTAEIID…ETRNVIARPV (83 aa).

This sequence belongs to the RNR ribonuclease family. RNase II subfamily.

The protein localises to the cytoplasm. It catalyses the reaction Exonucleolytic cleavage in the 3'- to 5'-direction to yield nucleoside 5'-phosphates.. Involved in mRNA degradation. Hydrolyzes single-stranded polyribonucleotides processively in the 3' to 5' direction. In Yersinia pestis bv. Antiqua (strain Antiqua), this protein is Exoribonuclease 2.